The following is a 1740-amino-acid chain: Vitamin B12-dependent ribonucleoside-diphosphate reductase (1740 aa).

An ATP-cone domain is found at 4 to 96 (EKVMKRDGRI…LYRKKKAEIR (93 aa)). Residues Thr-257, 272–273 (AC), and Gly-301 contribute to the substrate site. A disulfide bridge links Cys-273 with Cys-1308. In terms of domain architecture, DOD-type homing endonuclease 1 spans 443–582 (LAGFIAGDGC…VTHYLNALGI (140 aa)). The Proton acceptor role is filled by Asn-913. 913–914 (NP) lines the substrate pocket. In terms of domain architecture, DOD-type homing endonuclease 2 spans 1063–1194 (VLGWFIGDGY…VQDLLLLFGI (132 aa)). Cys-1297 serves as the catalytic Cysteine radical intermediate. Substrate-binding positions include 1297–1299 (CGE) and 1471–1475 (PTGSV). Glu-1299 acts as the Proton acceptor in catalysis.

It belongs to the ribonucleoside diphosphate reductase class-2 family. It depends on adenosylcob(III)alamin as a cofactor. Post-translationally, this protein undergoes a protein self splicing that involves a post-translational excision of the intervening region (intein) followed by peptide ligation.

The enzyme catalyses a 2'-deoxyribonucleoside 5'-diphosphate + [thioredoxin]-disulfide + H2O = a ribonucleoside 5'-diphosphate + [thioredoxin]-dithiol. In terms of biological role, provides the precursors necessary for DNA synthesis. Catalyzes the biosynthesis of deoxyribonucleotides from the corresponding ribonucleotides. The polypeptide is Vitamin B12-dependent ribonucleoside-diphosphate reductase (rnr) (Pyrococcus furiosus (strain ATCC 43587 / DSM 3638 / JCM 8422 / Vc1)).